Reading from the N-terminus, the 386-residue chain is 26S proteasome non-ATPase regulatory subunit 13 homolog B (386 aa).

N-acetylalanine is present on alanine 2. A PCI domain is found at 174-347; that stretch reads FSEFYKNALL…GTVYVSWAQP (174 aa).

This sequence belongs to the proteasome subunit S11 family. In terms of assembly, component of the 19S regulatory particle (RP/PA700) lid subcomplex of the 26S proteasome. The 26S proteasome is composed of a core protease (CP), known as the 20S proteasome, capped at one or both ends by the 19S regulatory particle (RP/PA700). The RP/PA700 complex is composed of at least 17 different subunits in two subcomplexes, the base and the lid, which form the portions proximal and distal to the 20S proteolytic core, respectively. As to expression, ubiquitous with highest expression in flowers.

Its function is as follows. Acts as a regulatory subunit of the 26S proteasome which is involved in the ATP-dependent degradation of ubiquitinated proteins. The protein is 26S proteasome non-ATPase regulatory subunit 13 homolog B (RPN9B) of Arabidopsis thaliana (Mouse-ear cress).